We begin with the raw amino-acid sequence, 420 residues long: Subtilisin (420 aa).

Residues 1–31 (MKRSGKIFTTAMLAVTLMMPAMGVSANEGNA) form the signal peptide. Positions 32–111 (AAEGNEKFRV…DKPEALYNAM (80 aa)) are excised as a propeptide. Residue Gln115 coordinates Ca(2+). The Peptidase S8 domain occupies 118–420 (PWGIKAIYNN…ASGFGFATVQ (303 aa)). The active-site Charge relay system is Asp145. Asp154 provides a ligand contact to Ca(2+). Residues His182 and Ser360 each act as charge relay system in the active site.

Belongs to the peptidase S8 family. The cofactor is Ca(2+).

The protein resides in the secreted. It carries out the reaction Hydrolysis of proteins with broad specificity for peptide bonds, and a preference for a large uncharged residue in P1. Hydrolyzes peptide amides.. Subtilisin is an extracellular alkaline serine protease, it catalyzes the hydrolysis of proteins and peptide amides. The polypeptide is Subtilisin (sub1) (Bacillus sp. (strain TA39)).